The sequence spans 125 residues: Glycine cleavage system H protein (125 aa).

The region spanning 21–103 (SVTIGISNQA…YSAGWIVKIK (83 aa)) is the Lipoyl-binding domain. Lysine 62 is modified (N6-lipoyllysine).

Belongs to the GcvH family. As to quaternary structure, the glycine cleavage system is composed of four proteins: P, T, L and H. Requires (R)-lipoate as cofactor.

Functionally, the glycine cleavage system catalyzes the degradation of glycine. The H protein shuttles the methylamine group of glycine from the P protein to the T protein. The chain is Glycine cleavage system H protein from Psychromonas ingrahamii (strain DSM 17664 / CCUG 51855 / 37).